The chain runs to 440 residues: Dynein axonemal assembly factor 11 (440 aa).

LRR repeat units lie at residues 20 to 43 (IFSLEELSLHQQDIQRIEHIHKWC), 44 to 65 (RDLKILYLQNNLIPKIENVGRL), 66 to 89 (KKLEYLNLALNNIEVIENLEGCES), and 90 to 110 (LQKLDLTVNFVGRLSSVETLK). An LRRCT domain is found at 128–146 (YQGYRQYVVATVPQLQSLD). Residues 178-192 (EEREKQKSNANEHPE) show a composition bias toward basic and acidic residues. 2 disordered regions span residues 178–267 (EERE…RTLI) and 363–440 (PKKR…PPLM). Over residues 193-211 (INQSLSESQNGTQQYPESS) the composition is skewed to polar residues. The segment covering 236–259 (SRLEAHRHLEEKRRANEKEKEKPK) has biased composition (basic and acidic residues). Residues 276 to 374 (VNEPKLDFSL…KRTIRPTSVT (99 aa)) enclose the CS domain. The span at 369–378 (RPTSVTSNQN) shows a compositional bias: polar residues. Basic and acidic residues-rich tracts occupy residues 379–392 (NKKDTRAAPRRELL) and 420–431 (GLEERPVSKDFV).

It belongs to the tilB family. In terms of assembly, interacts with dvl2. Interacts with kur. Expressed in kinocilia of hair cells.

Its subcellular location is the cytoplasm. The protein localises to the dynein axonemal particle. The protein resides in the cell projection. It is found in the cilium. Functionally, plays a crucial role in regulating cilia motility in pronephric tubules, cloaca and neural tube. Required for establishing left-right asymmetry of the body plan; controls cell fate and convergent extension (CE) movements during gastrulation, respectively, via the Wnt and the planar cell polarity (PCP) signaling pathways. Required for the proper development of renal glomeruli and tubules. This chain is Dynein axonemal assembly factor 11 (dnaaf11), found in Danio rerio (Zebrafish).